The primary structure comprises 60 residues: Metallothionein B (60 aa).

The segment at 1–28 (MDPCECSKSGTCNCGGSCTCTNCSCTSC) is beta. Cysteine 4, cysteine 6, cysteine 12, cysteine 14, cysteine 18, cysteine 20, cysteine 23, cysteine 25, cysteine 28, cysteine 32, cysteine 33, cysteine 35, cysteine 36, cysteine 40, cysteine 43, cysteine 47, cysteine 49, cysteine 54, cysteine 58, and cysteine 59 together coordinate a divalent metal cation. The interval 29 to 60 (KKSCCPCCPSGCTKCASGCVCKGKTCDTSCCQ) is alpha.

Belongs to the metallothionein superfamily. Type 1 family.

Functionally, metallothioneins have a high content of cysteine residues that bind various heavy metals. The sequence is that of Metallothionein B (mtb) from Trematomus bernacchii (Emerald rockcod).